Here is an 85-residue protein sequence, read N- to C-terminus: Large ribosomal subunit protein bL31B (85 aa).

This sequence belongs to the bacterial ribosomal protein bL31 family. Type B subfamily. In terms of assembly, part of the 50S ribosomal subunit.

This chain is Large ribosomal subunit protein bL31B, found in Pseudomonas entomophila (strain L48).